A 136-amino-acid chain; its full sequence is NADPH-dependent 7-cyano-7-deazaguanine reductase (136 aa).

C50 functions as the Thioimide intermediate in the catalytic mechanism. D57 acts as the Proton donor in catalysis. Substrate-binding positions include 72–74 (YEL) and 91–92 (HE).

It belongs to the GTP cyclohydrolase I family. QueF type 1 subfamily.

It localises to the cytoplasm. The catalysed reaction is 7-aminomethyl-7-carbaguanine + 2 NADP(+) = 7-cyano-7-deazaguanine + 2 NADPH + 3 H(+). It participates in tRNA modification; tRNA-queuosine biosynthesis. In terms of biological role, catalyzes the NADPH-dependent reduction of 7-cyano-7-deazaguanine (preQ0) to 7-aminomethyl-7-deazaguanine (preQ1). The polypeptide is NADPH-dependent 7-cyano-7-deazaguanine reductase (Prochlorococcus marinus (strain MIT 9312)).